A 295-amino-acid chain; its full sequence is UDP-N-acetylenolpyruvoylglucosamine reductase (295 aa).

In terms of domain architecture, FAD-binding PCMH-type spans 26–189 (VGGQADILFK…IEAEFKGVSS (164 aa)). Arg169 is an active-site residue. Cys218 functions as the Proton donor in the catalytic mechanism. The active site involves Glu288.

This sequence belongs to the MurB family. FAD is required as a cofactor.

Its subcellular location is the cytoplasm. The enzyme catalyses UDP-N-acetyl-alpha-D-muramate + NADP(+) = UDP-N-acetyl-3-O-(1-carboxyvinyl)-alpha-D-glucosamine + NADPH + H(+). Its pathway is cell wall biogenesis; peptidoglycan biosynthesis. Functionally, cell wall formation. This Wolbachia sp. subsp. Brugia malayi (strain TRS) protein is UDP-N-acetylenolpyruvoylglucosamine reductase.